Consider the following 291-residue polypeptide: Halorhodopsin (291 aa).

Residues 1-30 (MTETLPPVTESAVALQAEVTQRELFEFVLN) lie on the Extracellular side of the membrane. Residues 31–56 (DPLLASSLYINIALAGLSILLFVFMT) form a helical membrane-spanning segment. Topologically, residues 57-62 (RGLDDP) are cytoplasmic. A helical transmembrane segment spans residues 63-86 (RAKLIAVSTILVPVVSIASYTGLA). At 87-120 (SGLTISVLEMPAGHFAEGSSVMLGGEEVDGVVTM) the chain is on the extracellular side. The chain crosses the membrane as a helical span at residues 121–142 (WGRYLTWALSTPMILLALGLLA). Residues 143-145 (GSN) are Cytoplasmic-facing. Residues 146-169 (ATKLFTAITFDIAMCVTGLAAALT) form a helical membrane-spanning segment. At 170–172 (TSS) the chain is on the extracellular side. Residues 173 to 195 (HLMRWFWYAISCACFLVVLYILL) form a helical membrane-spanning segment. At 196–207 (VEWAQDAKAAGT) the chain is on the cytoplasmic side. The chain crosses the membrane as a helical span at residues 208–231 (ADMFNTLKLLTVVMWLGYPIVWAL). Over 232–240 (GVEGIAVLP) the chain is Extracellular. A helical transmembrane segment spans residues 241 to 269 (VGVTSWGYSFLDIVAKYIFAFLLLNYLTS). Position 256 is an N6-(retinylidene)lysine (Lys256). The Cytoplasmic segment spans residues 270–291 (NESVVSGSILDVPSASGTPADD).

It belongs to the archaeal/bacterial/fungal opsin family.

It is found in the cell membrane. Light-driven anion pump. Binding affinity for the anions is in the order, bromide &gt; chloride &gt; nitrate &gt; azide &gt; bromate and binding is pH dependent. This is Halorhodopsin (hop) from Natronomonas pharaonis (Natronobacterium pharaonis).